The chain runs to 937 residues: MLKLLLGDPNARKLKRYQPIVSDINLLEEDIFPLSDDALRDKTAAFQEQLASAGSLENQRPILDEILPEAFAVVREAGKRVLGMRHFDVQLIGGMVLHEGQIAEMKTGEGKTLVATLPSYLNALTGRGVHVVTVNDYLARRDAEWMGQVHRFLGLSVGLIQQDMRPEERRRNYNCDITYATNSELGFDYLRDNMAADISEVVQREFQYCVIDEVDSILIDEARTPLIISGQVQRPQEKYQQAAQVAQALTRAAEMGKDGIDPEGDYEVDEKQRSCTLTDEGFAKAEQMLGVQDLFDPQDPWAHYITNALKAKDLFVKDVNYIVRDGEAVIVDEFTGRVMPGRRWSDGQHQAIEAKEALPIQAETQTLASITYQNFFLLYPRLAGMTGTAKTEEVEFEKTYKLETTIVPTNRVRARQDWPDQVYKTETAKWRAVANETVDIHKNGRPVLVGTTSVEKSELLSALLAEQEIPHNLLNAKPENVERESEIVAQAGRAGAVTIATNMAGRGTDIILGGNSDYMARLKLREVLLGRLVKPEENHKPPVPLQRNAAAGFSEAPTASATPSRDSLYPCVLTDDTDQTLAQLARDLVKAWGDRALTLIELEERIATAAEKAPTDDPNIQALRAATARVKGEFDAVVKQEEQRVREAGGLHVIGTERHESRRVDNQLRGRAGRQGDPGSTRFFLSLGDNLLRIFGGDRVAGLMNAFRVEEDMPIESGMLTRSLEGAQKKVETYYYDIRKQVFEYDEVMNNQRRAVYSERRRVLDGRALKKQVIGYGERTMNEIVEAYVNPDLPPEEWDTAQLVAKVKEFVYLLEDLTPEQVQGLGMDELKAFLQEQLRNAYDIKEGQVEQQRPGLMREAERFFILQQIDTLWREHLQAMDALRESVGLRGYGQKDPLIEYKNEGYDMFLEMMTNMRRNVIYSMFMFQPAAPQQSQV.

Residues glutamine 90, 108-112, and aspartate 509 contribute to the ATP site; that span reads GEGKT.

Belongs to the SecA family. As to quaternary structure, monomer and homodimer. Part of the essential Sec protein translocation apparatus which comprises SecA, SecYEG and auxiliary proteins SecDF. Other proteins may also be involved.

It localises to the cell inner membrane. The protein resides in the cellular thylakoid membrane. It is found in the cytoplasm. It catalyses the reaction ATP + H2O + cellular proteinSide 1 = ADP + phosphate + cellular proteinSide 2.. In terms of biological role, part of the Sec protein translocase complex. Interacts with the SecYEG preprotein conducting channel. Has a central role in coupling the hydrolysis of ATP to the transfer of proteins into and across the cell membrane, serving as an ATP-driven molecular motor driving the stepwise translocation of polypeptide chains across the membrane. Functionally, probably participates in protein translocation into and across both the cytoplasmic and thylakoid membranes in cyanobacterial cells. This is Protein translocase subunit SecA from Parasynechococcus marenigrum (strain WH8102).